Here is a 1412-residue protein sequence, read N- to C-terminus: DNA-directed RNA polymerase subunit beta' (1412 aa).

Positions 70, 72, 85, and 88 each coordinate Zn(2+). The Mg(2+) site is built by Asp460, Asp462, and Asp464. 4 residues coordinate Zn(2+): Cys819, Cys893, Cys900, and Cys903. The segment at 1393–1412 is disordered; that stretch reads EAFEFGTPSAPAEEPQHPAE.

It belongs to the RNA polymerase beta' chain family. The RNAP catalytic core consists of 2 alpha, 1 beta, 1 beta' and 1 omega subunit. When a sigma factor is associated with the core the holoenzyme is formed, which can initiate transcription. The cofactor is Mg(2+). Requires Zn(2+) as cofactor.

The catalysed reaction is RNA(n) + a ribonucleoside 5'-triphosphate = RNA(n+1) + diphosphate. Its function is as follows. DNA-dependent RNA polymerase catalyzes the transcription of DNA into RNA using the four ribonucleoside triphosphates as substrates. The sequence is that of DNA-directed RNA polymerase subunit beta' from Burkholderia mallei (strain NCTC 10229).